The sequence spans 751 residues: Palmitoyltransferase ZDHHC8B (751 aa).

The Cytoplasmic portion of the chain corresponds to 1–13; sequence MPNSVGKRFKPTK. The helical transmembrane segment at 14 to 34 threads the bilayer; that stretch reads YIPVSTAATLLVGSTTLFFVF. Residues 35 to 41 lie on the Extracellular side of the membrane; sequence TCPWLTK. A helical transmembrane segment spans residues 42 to 62; it reads AVSPVVPLYNGIVFLFVLANF. Over 63–148 the chain is Cytoplasmic; sequence SMATFMDPGV…NCIGRRNYRY (86 aa). Residues 104 to 154 enclose the DHHC domain; sequence KWCATCHFYRPPRCSHCSVCDNCVEEFDHHCPWVNNCIGRRNYRYFFLFLL. Cys-134 (S-palmitoyl cysteine intermediate) is an active-site residue. Residues 149–169 form a helical membrane-spanning segment; sequence FFLFLLSLSVHMVGVFSFGLL. Topologically, residues 170-185 are extracellular; that stretch reads FVLHHLETLSALHTTV. The helical transmembrane segment at 186–206 threads the bilayer; that stretch reads TLVVMCVTGLFFIPVMGLTGF. The Cytoplasmic segment spans residues 207 to 751; sequence HMVLVARGRT…VGGTTYEISV (545 aa). Disordered stretches follow at residues 293–346, 437–461, 633–659, 666–685, and 703–736; these read RSKS…PSTP, CTPL…SPGT, RSSA…GMNR, RSPV…SPSY, and HLGT…HTSV. Residues 326 to 338 show a composition bias toward low complexity; sequence SQLTSSEESSLSS. Polar residues-rich tracts occupy residues 633–651, 669–681, and 724–733; these read RSSA…TSLH, VHQS…SVPR, and GTPSGTPSRH.

It belongs to the DHHC palmitoyltransferase family. ERF2/ZDHHC9 subfamily.

The protein resides in the golgi apparatus membrane. It is found in the mitochondrion membrane. It carries out the reaction L-cysteinyl-[protein] + hexadecanoyl-CoA = S-hexadecanoyl-L-cysteinyl-[protein] + CoA. Palmitoyltransferase that catalyzes the addition of palmitate onto various protein substrates and therefore function in several unrelated biological processes. The protein is Palmitoyltransferase ZDHHC8B of Danio rerio (Zebrafish).